We begin with the raw amino-acid sequence, 514 residues long: Light-independent protochlorophyllide reductase subunit B (514 aa).

[4Fe-4S] cluster is bound at residue Asp36. Asp300 acts as the Proton donor in catalysis. 435–436 contributes to the substrate binding site; the sequence is GM.

The protein belongs to the ChlB/BchB/BchZ family. Protochlorophyllide reductase is composed of three subunits; ChlL, ChlN and ChlB. Forms a heterotetramer of two ChlB and two ChlN subunits. The cofactor is [4Fe-4S] cluster.

It is found in the plastid. The protein localises to the chloroplast. The catalysed reaction is chlorophyllide a + oxidized 2[4Fe-4S]-[ferredoxin] + 2 ADP + 2 phosphate = protochlorophyllide a + reduced 2[4Fe-4S]-[ferredoxin] + 2 ATP + 2 H2O. It functions in the pathway porphyrin-containing compound metabolism; chlorophyll biosynthesis (light-independent). Functionally, component of the dark-operative protochlorophyllide reductase (DPOR) that uses Mg-ATP and reduced ferredoxin to reduce ring D of protochlorophyllide (Pchlide) to form chlorophyllide a (Chlide). This reaction is light-independent. The NB-protein (ChlN-ChlB) is the catalytic component of the complex. This Pleurastrum terricola (Filamentous green alga) protein is Light-independent protochlorophyllide reductase subunit B.